A 61-amino-acid chain; its full sequence is Large ribosomal subunit protein uL30 (61 aa).

Belongs to the universal ribosomal protein uL30 family. As to quaternary structure, part of the 50S ribosomal subunit.

This Corynebacterium aurimucosum (strain ATCC 700975 / DSM 44827 / CIP 107346 / CN-1) (Corynebacterium nigricans) protein is Large ribosomal subunit protein uL30.